A 595-amino-acid polypeptide reads, in one-letter code: MFS-type transporter phomT (595 aa).

The span at 1–11 shows a compositional bias: basic and acidic residues; it reads MESDGKSDRTK. The disordered stretch occupies residues 1-62; that stretch reads MESDGKSDRT…HVSADDGPVD (62 aa). The segment covering 30 to 48 has biased composition (polar residues); that stretch reads PGHSTDTEGNGSDNNNTQV. 2 N-linked (GlcNAc...) asparagine glycosylation sites follow: N39 and N44. Helical transmembrane passes span 91 to 111, 126 to 146, and 156 to 176; these read IILL…TIVA, DVGW…LFFG, and WVFL…GVAP. N177 carries an N-linked (GlcNAc...) asparagine glycan. A run of 3 helical transmembrane segments spans residues 186–206, 217–237, and 245–265; these read AVAG…IAFS, ALIS…GGVF, and WCFY…VFFL. An N-linked (GlcNAc...) asparagine glycan is attached at N277. 7 consecutive transmembrane segments (helical) span residues 290-310, 320-340, 362-382, 409-429, 451-471, 483-503, and 559-579; these read IGTA…QWGG, VVAL…LQFW, VFTG…PIWF, IVGG…YALP, WIGY…QGIV, AIGT…FVSV, and VIWT…AVIF.

The protein belongs to the major facilitator superfamily. TCR/Tet family.

Its subcellular location is the cell membrane. In terms of biological role, MFS-type transporter; part of the gene cluster that mediates the biosynthesis of the phomopsins, a group of hexapeptide mycotoxins which infects lupins and causes lupinosis disease in livestock. PhomT is likely to be involved in the cellular export of phomopsins. This is MFS-type transporter phomT from Diaporthe leptostromiformis (Lupinosis disease fungus).